The following is a 360-amino-acid chain: Glutamate 5-kinase (360 aa).

Lysine 7 provides a ligand contact to ATP. Serine 47, aspartate 134, and asparagine 146 together coordinate substrate. Residues 166–167 and 210–216 contribute to the ATP site; these read TD and TGGISTK. In terms of domain architecture, PUA spans 275 to 356; the sequence is VGKITLDDGA…SSIIVVHRDV (82 aa).

The protein belongs to the glutamate 5-kinase family.

The protein resides in the cytoplasm. It carries out the reaction L-glutamate + ATP = L-glutamyl 5-phosphate + ADP. It functions in the pathway amino-acid biosynthesis; L-proline biosynthesis; L-glutamate 5-semialdehyde from L-glutamate: step 1/2. Its function is as follows. Catalyzes the transfer of a phosphate group to glutamate to form L-glutamate 5-phosphate. The sequence is that of Glutamate 5-kinase from Prochlorococcus marinus (strain AS9601).